Here is a 209-residue protein sequence, read N- to C-terminus: tRNA (guanine-N(7)-)-methyltransferase (209 aa).

S-adenosyl-L-methionine contacts are provided by D35, E60, N87, and D113. D113 is a catalytic residue. Substrate contacts are provided by K117 and D149.

The protein belongs to the class I-like SAM-binding methyltransferase superfamily. TrmB family.

It carries out the reaction guanosine(46) in tRNA + S-adenosyl-L-methionine = N(7)-methylguanosine(46) in tRNA + S-adenosyl-L-homocysteine. It functions in the pathway tRNA modification; N(7)-methylguanine-tRNA biosynthesis. In terms of biological role, catalyzes the formation of N(7)-methylguanine at position 46 (m7G46) in tRNA. The chain is tRNA (guanine-N(7)-)-methyltransferase from Prochlorococcus marinus (strain AS9601).